The primary structure comprises 320 residues: 3-hydroxybenzoate 6-hydroxylase 2 (320 aa).

The interval 1–25 is disordered; the sequence is MRSTNTRSARSRPTKRSVNASATPT. Positions 16-25 are enriched in polar residues; it reads RSVNASATPT.

Belongs to the 3-hydroxybenzoate 6-hydroxylase family. FAD is required as a cofactor.

It carries out the reaction 3-hydroxybenzoate + NADH + O2 + H(+) = 2,5-dihydroxybenzoate + NAD(+) + H2O. Functionally, catalyzes the conversion of 3-hydroxybenzoate to gentisate. The chain is 3-hydroxybenzoate 6-hydroxylase 2 (hbzD) from Aquipseudomonas alcaligenes (Pseudomonas alcaligenes).